A 671-amino-acid polypeptide reads, in one-letter code: Leucine aminopeptidase 2 (671 aa).

Residues 184–186 (QLE) and 311–316 (PYGGME) each bind substrate. Residue histidine 340 coordinates Zn(2+). Glutamate 341 (proton acceptor) is an active-site residue. Zn(2+) contacts are provided by histidine 344 and glutamate 363. The active-site Proton donor is the tyrosine 429.

Belongs to the peptidase M1 family. Requires Zn(2+) as cofactor.

It is found in the cytoplasm. The protein localises to the nucleus. It catalyses the reaction an epoxide + H2O = an ethanediol. With respect to regulation, inhibited by 3-(4-benzyloxyphenyl)-2-(R)-amino-1-propanethiol (thioamine) and N-hydroxy-N-(2-(S)-amino-3-(4-benzyloxyphenyl)propyl)-5-carboxypen-tanamide (hydroxamic acid). The aminopeptidase activity is stimulated by LTA(4). Its function is as follows. Aminopeptidase that preferentially cleaves di- and tripeptides. Also has low epoxide hydrolase activity (in vitro). Can hydrolyze the epoxide leukotriene LTA(4) but it forms preferentially 5,6-dihydroxy-7,9,11,14-eicosatetraenoic acid rather than the cytokine leukotriene B(4) as the product compared to the homologous mammalian enzyme (in vitro). The chain is Leucine aminopeptidase 2 from Saccharomyces cerevisiae (strain YJM789) (Baker's yeast).